A 153-amino-acid chain; its full sequence is Small ribosomal subunit protein bS6 (153 aa).

The tract at residues 97 to 153 (EEGPSAMMRKADRDRERDDRGGGFRGERDGGGFRGDRGDRGDRGPRRPRDEETADEE) is disordered. The span at 105–147 (RKADRDRERDDRGGGFRGERDGGGFRGDRGDRGDRGPRRPRDE) shows a compositional bias: basic and acidic residues.

This sequence belongs to the bacterial ribosomal protein bS6 family.

In terms of biological role, binds together with bS18 to 16S ribosomal RNA. The protein is Small ribosomal subunit protein bS6 of Bradyrhizobium sp. (strain BTAi1 / ATCC BAA-1182).